The following is a 75-amino-acid chain: Small ribosomal subunit protein bS18 (75 aa).

It belongs to the bacterial ribosomal protein bS18 family. In terms of assembly, part of the 30S ribosomal subunit. Forms a tight heterodimer with protein bS6.

Binds as a heterodimer with protein bS6 to the central domain of the 16S rRNA, where it helps stabilize the platform of the 30S subunit. In Ruegeria sp. (strain TM1040) (Silicibacter sp.), this protein is Small ribosomal subunit protein bS18.